We begin with the raw amino-acid sequence, 589 residues long: NADP-dependent malic enzyme (589 aa).

The Proton donor role is filled by Y137. R190 contributes to the NAD(+) binding site. K208 functions as the Proton acceptor in the catalytic mechanism. A divalent metal cation contacts are provided by E280, D281, and D304. D304 contributes to the NAD(+) binding site. Position 333 to 349 (333 to 349 (LFLGAGEAGTGIAELIA)) interacts with NADP(+). Residue N445 coordinates NAD(+).

It belongs to the malic enzymes family. In terms of assembly, homotetramer. Mg(2+) is required as a cofactor. Mn(2+) serves as cofactor.

The protein localises to the cytoplasm. It carries out the reaction (S)-malate + NADP(+) = pyruvate + CO2 + NADPH. It catalyses the reaction oxaloacetate + H(+) = pyruvate + CO2. This Phaseolus vulgaris (Kidney bean) protein is NADP-dependent malic enzyme (ME1).